Here is a 489-residue protein sequence, read N- to C-terminus: CBL-interacting serine/threonine-protein kinase 12 (489 aa).

Residues 26–280 form the Protein kinase domain; sequence YEMGKLLGHG…FPEIMENSWF (255 aa). ATP contacts are provided by residues 32 to 40 and lysine 55; that span reads LGHGTFAKV. Catalysis depends on aspartate 148, which acts as the Proton acceptor. The segment at 166 to 195 is activation loop; it reads DFGLSAVSDQIRQDGLFHTFCGTPAYVAPE. Serine 170 bears the Phosphoserine mark. Threonine 184 is modified (phosphothreonine). An NAF domain is found at 336–360; that stretch reads PRPASLNAFDIISFSQGFDLSGLFD. The PPI stretch occupies residues 363–392; sequence GEGSRFVSGAPVSKIISKLEEIAKVVSFTV.

Belongs to the protein kinase superfamily. CAMK Ser/Thr protein kinase family. SNF1 subfamily. In terms of assembly, interacts with CBL2 and CBL3. Mn(2+) is required as a cofactor. Expressed in roots and shoots.

It catalyses the reaction L-seryl-[protein] + ATP = O-phospho-L-seryl-[protein] + ADP + H(+). The enzyme catalyses L-threonyl-[protein] + ATP = O-phospho-L-threonyl-[protein] + ADP + H(+). Its function is as follows. CIPK serine-threonine protein kinases interact with CBL proteins. Binding of a CBL protein to the regulatory NAF domain of CIPK protein lead to the activation of the kinase in a calcium-dependent manner. This chain is CBL-interacting serine/threonine-protein kinase 12 (CIPK12), found in Arabidopsis thaliana (Mouse-ear cress).